The chain runs to 358 residues: Cholesterol galactosyltransferase (358 aa).

Belongs to the glycosyltransferase 2 family.

It carries out the reaction cholesterol + UDP-alpha-D-galactose = cholesteryl 3-beta-D-galactoside + UDP + H(+). Its pathway is glycolipid biosynthesis. Galactosyltransferase involved in the synthesis of cholesterol glycolipids, which are formed by the use of host-derived cholesterol and have been shown to be immunogenic, and possibly contribute to Lyme disease pathogenesis. Catalyzes the formation of cholesteryl beta-D-galactopyranoside (CGal) from cholesterol and UDP-alpha-D-galactose. Cannot use GDP-mannose. This Borreliella burgdorferi (strain ATCC 35210 / DSM 4680 / CIP 102532 / B31) (Borrelia burgdorferi) protein is Cholesterol galactosyltransferase.